The following is a 599-amino-acid chain: Elongation factor 4 (599 aa).

Positions serine 5–glutamate 187 constitute a tr-type G domain. GTP contacts are provided by residues aspartate 17–threonine 22 and asparagine 134–aspartate 137.

Belongs to the TRAFAC class translation factor GTPase superfamily. Classic translation factor GTPase family. LepA subfamily.

It localises to the cell inner membrane. It carries out the reaction GTP + H2O = GDP + phosphate + H(+). Functionally, required for accurate and efficient protein synthesis under certain stress conditions. May act as a fidelity factor of the translation reaction, by catalyzing a one-codon backward translocation of tRNAs on improperly translocated ribosomes. Back-translocation proceeds from a post-translocation (POST) complex to a pre-translocation (PRE) complex, thus giving elongation factor G a second chance to translocate the tRNAs correctly. Binds to ribosomes in a GTP-dependent manner. The chain is Elongation factor 4 from Pseudomonas paraeruginosa (strain DSM 24068 / PA7) (Pseudomonas aeruginosa (strain PA7)).